The primary structure comprises 87 residues: Neurotoxin Cex4 (87 aa).

A signal peptide spans 1–19 (MNSLLMITACLFLIGTVWA). In terms of domain architecture, LCN-type CS-alpha/beta spans 20–85 (KEGYLVNKST…TYPLPNKSCG (66 aa)). 4 cysteine pairs are disulfide-bonded: Cys31–Cys84, Cys35–Cys60, Cys44–Cys65, and Cys48–Cys67. Cys84 is modified (cysteine amide). A propeptide spanning residues 85 to 87 (GRK) is cleaved from the precursor.

This sequence belongs to the long (4 C-C) scorpion toxin superfamily. Sodium channel inhibitor family. Beta subfamily. Expressed by the venom gland.

The protein resides in the secreted. Beta toxins bind voltage-independently at site-4 of sodium channels (Nav) and shift the voltage of activation toward more negative potentials thereby affecting sodium channel activation and promoting spontaneous and repetitive firing. The protein is Neurotoxin Cex4 of Centruroides exilicauda (Bark scorpion).